A 90-amino-acid polypeptide reads, in one-letter code: Protein LURE 1.5 (90 aa).

An N-terminal signal peptide occupies residues 1 to 19; the sequence is MKLPIIFLTLLIFVSSCTS. 2 cysteine pairs are disulfide-bonded: Cys-58/Cys-75 and Cys-61/Cys-82.

Belongs to the DEFL family. Expressed in the pistil. Detected exclusively in the synergid cells.

It is found in the secreted. Inactive pollen tube attractants guiding pollen tubes to the ovular micropyle. The protein is Protein LURE 1.5 of Arabidopsis thaliana (Mouse-ear cress).